A 224-amino-acid chain; its full sequence is Probable septum site-determining protein MinC (224 aa).

It belongs to the MinC family. As to quaternary structure, interacts with MinD and FtsZ.

Cell division inhibitor that blocks the formation of polar Z ring septums. Rapidly oscillates between the poles of the cell to destabilize FtsZ filaments that have formed before they mature into polar Z rings. Prevents FtsZ polymerization. This chain is Probable septum site-determining protein MinC, found in Shewanella amazonensis (strain ATCC BAA-1098 / SB2B).